We begin with the raw amino-acid sequence, 228 residues long: Pyridoxal phosphate homeostasis protein (228 aa).

Residue lysine 35 is modified to N6-(pyridoxal phosphate)lysine.

Belongs to the pyridoxal phosphate-binding protein YggS/PROSC family.

Pyridoxal 5'-phosphate (PLP)-binding protein, which is involved in PLP homeostasis. The protein is Pyridoxal phosphate homeostasis protein of Aquifex aeolicus (strain VF5).